We begin with the raw amino-acid sequence, 133 residues long: DNA-directed RNA polymerase subunit omega (133 aa).

It belongs to the RNA polymerase subunit omega family. The RNAP catalytic core consists of 2 alpha, 1 beta, 1 beta' and 1 omega subunit. When a sigma factor is associated with the core the holoenzyme is formed, which can initiate transcription.

It carries out the reaction RNA(n) + a ribonucleoside 5'-triphosphate = RNA(n+1) + diphosphate. Its function is as follows. Promotes RNA polymerase assembly. Latches the N- and C-terminal regions of the beta' subunit thereby facilitating its interaction with the beta and alpha subunits. The chain is DNA-directed RNA polymerase subunit omega from Brucella abortus (strain S19).